The primary structure comprises 255 residues: Large ribosomal subunit protein uL4 (255 aa).

It belongs to the universal ribosomal protein uL4 family. In terms of assembly, part of the 50S ribosomal subunit.

One of the primary rRNA binding proteins, this protein initially binds near the 5'-end of the 23S rRNA. It is important during the early stages of 50S assembly. It makes multiple contacts with different domains of the 23S rRNA in the assembled 50S subunit and ribosome. Functionally, forms part of the polypeptide exit tunnel. The protein is Large ribosomal subunit protein uL4 of Pyrococcus furiosus (strain ATCC 43587 / DSM 3638 / JCM 8422 / Vc1).